The chain runs to 53 residues: UPF0391 membrane protein Bcep18194_C7021 (53 aa).

A run of 2 helical transmembrane segments spans residues 5–25 and 30–50; these read AVIF…GIAA and IAKI…LLGV.

This sequence belongs to the UPF0391 family.

It localises to the cell membrane. The protein is UPF0391 membrane protein Bcep18194_C7021 of Burkholderia lata (strain ATCC 17760 / DSM 23089 / LMG 22485 / NCIMB 9086 / R18194 / 383).